A 320-amino-acid polypeptide reads, in one-letter code: Ferrochelatase (320 aa).

Positions 194 and 275 each coordinate Fe cation.

It belongs to the ferrochelatase family.

The protein localises to the cytoplasm. The catalysed reaction is heme b + 2 H(+) = protoporphyrin IX + Fe(2+). Its pathway is porphyrin-containing compound metabolism; protoheme biosynthesis; protoheme from protoporphyrin-IX: step 1/1. Catalyzes the ferrous insertion into protoporphyrin IX. The chain is Ferrochelatase from Vibrio atlanticus (strain LGP32) (Vibrio splendidus (strain Mel32)).